Reading from the N-terminus, the 439-residue chain is MSQANAAAKNASSDVFFNASLEDIDSEIFGAIRNELGRQRHEIELIASENIVSRAVLEAQGSILTNKYAEGYPGKRYYGGCQYVDVVEELAIERAKKLFGCEFANVQPNSGSQMNQAVFLALLQPGDTFMGLDLNSGGHLTHGSPVNMSGKWFNVVSYGVRKDDHLLDMDEVARLARENKPKLILAGGTAYSRVWDWKRFREIADEVGAYLMVDMAHIAGLVAGGVHPSPVPHAHVCTTTTHKSLRGPRGGMILTNDADIAKKINSAVFPGLQGGPLMHVIAGKAVAFAEALKPEFKLYAKNVVDNARALAEELKSNGLDIVSGGTDNHLMLVDLRPKNATGKRAEAALGRANITCNKNGIPFDPEKPFVTSGVRLGTPAGTTRGFGVTEFKEIGSLIAEVLDGLKVANSDEGNAAVEQAVKEKVMALTDRFPMYGYQG.

(6S)-5,6,7,8-tetrahydrofolate is bound by residues Leu-134 and 138–140 (GHL). Lys-243 carries the N6-(pyridoxal phosphate)lysine modification.

It belongs to the SHMT family. Homodimer. It depends on pyridoxal 5'-phosphate as a cofactor.

The protein localises to the cytoplasm. It catalyses the reaction (6R)-5,10-methylene-5,6,7,8-tetrahydrofolate + glycine + H2O = (6S)-5,6,7,8-tetrahydrofolate + L-serine. It functions in the pathway one-carbon metabolism; tetrahydrofolate interconversion. The protein operates within amino-acid biosynthesis; glycine biosynthesis; glycine from L-serine: step 1/1. Catalyzes the reversible interconversion of serine and glycine with tetrahydrofolate (THF) serving as the one-carbon carrier. This reaction serves as the major source of one-carbon groups required for the biosynthesis of purines, thymidylate, methionine, and other important biomolecules. Also exhibits THF-independent aldolase activity toward beta-hydroxyamino acids, producing glycine and aldehydes, via a retro-aldol mechanism. This is Serine hydroxymethyltransferase from Brucella anthropi (strain ATCC 49188 / DSM 6882 / CCUG 24695 / JCM 21032 / LMG 3331 / NBRC 15819 / NCTC 12168 / Alc 37) (Ochrobactrum anthropi).